Reading from the N-terminus, the 334-residue chain is Isopentenyl-diphosphate delta-isomerase (334 aa).

A substrate-binding site is contributed by 5–6; the sequence is RK. FMN is bound by residues 60 to 62, Ser-90, and Asn-117; that span reads AMT. Gln-147 contributes to the substrate binding site. Residue Glu-148 participates in Mg(2+) binding. Residues Lys-179, Ser-204, Thr-209, 253–255, and 274–275 each bind FMN; these read GVR and SR.

It belongs to the IPP isomerase type 2 family. Homooctamer. Dimer of tetramers. FMN serves as cofactor. The cofactor is NADPH. It depends on Mg(2+) as a cofactor.

It is found in the cytoplasm. The catalysed reaction is isopentenyl diphosphate = dimethylallyl diphosphate. Involved in the biosynthesis of isoprenoids. Catalyzes the 1,3-allylic rearrangement of the homoallylic substrate isopentenyl (IPP) to its allylic isomer, dimethylallyl diphosphate (DMAPP). The chain is Isopentenyl-diphosphate delta-isomerase from Streptococcus gordonii (strain Challis / ATCC 35105 / BCRC 15272 / CH1 / DL1 / V288).